The following is a 93-amino-acid chain: Leydig cell tumor 10 kDa protein (93 aa).

A disordered region spans residues 1-41 (MAQGQRKFQAQKPKSKAAAAERSRGPRKGGRVIGPKKARVV). Positions 7-18 (KFQAQKPKSKAA) are enriched in low complexity. Residues 25–39 (GPRKGGRVIGPKKAR) show a composition bias toward basic residues.

The protein belongs to the UPF0390 family. Leydig cell tumor, testis and placenta.

In terms of biological role, may have a potential role in hypercalcemia of malignancy. The protein is Leydig cell tumor 10 kDa protein of Rattus norvegicus (Rat).